A 531-amino-acid polypeptide reads, in one-letter code: Doublesex- and mab-3-related transcription factor A2 (531 aa).

Positions 69-116 (CARCRNHGVVSALKGHKRYCRWKDCLCAKCTLIAERQRVMAAQVALRR) form a DNA-binding region, DM. The disordered stretch occupies residues 197-312 (LQAGRPDSPQ…GGPGPRQRTP (116 aa)). Low complexity predominate over residues 274–285 (PGSSSPLGSESG). The 36-residue stretch at 310–345 (RTPLDILTRVFPGHRRGVLELVLQGCGGDVVQAIEQ) folds into the DMA domain.

It belongs to the DMRT family. Expressed in adult brain and testis, as well as in embryonic ovary, kidney, heart, lung, stomach and brain.

It is found in the nucleus. Its function is as follows. May be involved in sexual development. In Mus musculus (Mouse), this protein is Doublesex- and mab-3-related transcription factor A2 (Dmrta2).